The following is a 415-amino-acid chain: Serine hydroxymethyltransferase (415 aa).

Residues L117 and 121–123 (GHL) each bind (6S)-5,6,7,8-tetrahydrofolate. K226 carries the post-translational modification N6-(pyridoxal phosphate)lysine. E241 provides a ligand contact to (6S)-5,6,7,8-tetrahydrofolate.

Belongs to the SHMT family. Homodimer. Pyridoxal 5'-phosphate is required as a cofactor.

The protein resides in the cytoplasm. It catalyses the reaction (6R)-5,10-methylene-5,6,7,8-tetrahydrofolate + glycine + H2O = (6S)-5,6,7,8-tetrahydrofolate + L-serine. Its pathway is one-carbon metabolism; tetrahydrofolate interconversion. It participates in amino-acid biosynthesis; glycine biosynthesis; glycine from L-serine: step 1/1. Catalyzes the reversible interconversion of serine and glycine with tetrahydrofolate (THF) serving as the one-carbon carrier. This reaction serves as the major source of one-carbon groups required for the biosynthesis of purines, thymidylate, methionine, and other important biomolecules. Also exhibits THF-independent aldolase activity toward beta-hydroxyamino acids, producing glycine and aldehydes, via a retro-aldol mechanism. This is Serine hydroxymethyltransferase from Bacillus velezensis (strain DSM 23117 / BGSC 10A6 / LMG 26770 / FZB42) (Bacillus amyloliquefaciens subsp. plantarum).